We begin with the raw amino-acid sequence, 342 residues long: Galactose mutarotase (342 aa).

A Phosphoserine modification is found at Ser14. Beta-D-galactose contacts are provided by residues 81 to 82 and His107; that span reads NR. Residue Ser124 is modified to Phosphoserine. Catalysis depends on His176, which acts as the Proton donor. Residues 176 to 178, Asp243, Gln279, and Glu307 contribute to the beta-D-galactose site; that span reads HSY. Glu307 functions as the Proton acceptor in the catalytic mechanism.

Belongs to the aldose epimerase family. Monomer.

The protein resides in the cytoplasm. The enzyme catalyses alpha-D-galactose = beta-D-galactose. The catalysed reaction is alpha-D-glucose = beta-D-glucose. The protein operates within carbohydrate metabolism; hexose metabolism. Its pathway is carbohydrate metabolism; galactose metabolism. Its function is as follows. Mutarotase that catalyzes the interconversion of beta-D-galactose and alpha-D-galactose during galactose metabolism. Beta-D-galactose is metabolized in the liver into glucose 1-phosphate, the primary metabolic fuel, by the action of four enzymes that constitute the Leloir pathway: GALM, GALK1 (galactokinase), GALT (galactose-1-phosphate uridylyltransferase) and GALE (UDP-galactose-4'-epimerase). Involved in the maintenance of the equilibrium between the beta- and alpha-anomers of galactose, therefore ensuring a sufficient supply of the alpha-anomer for GALK1. Also active on D-glucose although shows a preference for galactose over glucose. This Rattus norvegicus (Rat) protein is Galactose mutarotase (Galm).